Here is a 670-residue protein sequence, read N- to C-terminus: Glycine--tRNA ligase beta subunit (670 aa).

It belongs to the class-II aminoacyl-tRNA synthetase family. As to quaternary structure, tetramer of two alpha and two beta subunits.

Its subcellular location is the cytoplasm. The catalysed reaction is tRNA(Gly) + glycine + ATP = glycyl-tRNA(Gly) + AMP + diphosphate. This chain is Glycine--tRNA ligase beta subunit, found in Thermotoga neapolitana (strain ATCC 49049 / DSM 4359 / NBRC 107923 / NS-E).